Here is a 386-residue protein sequence, read N- to C-terminus: Glucose-1-phosphate adenylyltransferase (386 aa).

Alpha-D-glucose 1-phosphate is bound by residues Y100, G165, 180 to 181, and S191; that span reads EK.

The protein belongs to the bacterial/plant glucose-1-phosphate adenylyltransferase family. Homotetramer.

It catalyses the reaction alpha-D-glucose 1-phosphate + ATP + H(+) = ADP-alpha-D-glucose + diphosphate. Its pathway is glycan biosynthesis; glycogen biosynthesis. Its function is as follows. Involved in the biosynthesis of ADP-glucose, a building block required for the elongation reactions to produce glycogen. Catalyzes the reaction between ATP and alpha-D-glucose 1-phosphate (G1P) to produce pyrophosphate and ADP-Glc. This is Glucose-1-phosphate adenylyltransferase from Clostridium botulinum (strain Alaska E43 / Type E3).